Consider the following 664-residue polypeptide: Methionine--tRNA ligase (664 aa).

The 'HIGH' region motif lies at 13–23 (PYTNGPCHIGH). Positions 144, 147, 156, and 160 each coordinate Zn(2+). A 'KMSKS' region motif is present at residues 327-331 (KFSKS). Lys330 is an ATP binding site. A tRNA-binding domain is found at 566 to 664 (EFGNLDIRIA…RPVKPGTKIR (99 aa)).

The protein belongs to the class-I aminoacyl-tRNA synthetase family. MetG type 1 subfamily. Homodimer. It depends on Zn(2+) as a cofactor.

It localises to the cytoplasm. The catalysed reaction is tRNA(Met) + L-methionine + ATP = L-methionyl-tRNA(Met) + AMP + diphosphate. Its function is as follows. Is required not only for elongation of protein synthesis but also for the initiation of all mRNA translation through initiator tRNA(fMet) aminoacylation. The chain is Methionine--tRNA ligase from Methanoculleus marisnigri (strain ATCC 35101 / DSM 1498 / JR1).